A 1410-amino-acid chain; its full sequence is MKDILKLFKKNKKVEEFDSIKISLASPEVIRSWSFGEVKKPETINYRTLNPERDGLFCARIFGPIKDYECLCGKYKRLKHRGVICEKCGVEVTQSKVRRDRMGHIELAAPIAHIWFLKSLPSRIGLLLDMPLRDIERVLYFESYVITDPGITNLEKYQVLSEDQYIQALEENEDEFEAKMGAEAIQNLLKNMDLKKTCKILKKEVLKVNSETKRKKVTKRIKLIESLLTSKNKPEWMILTVLPILPPDLRPLVPLDGGRFATSDLNDLYRRVINRNNRLKRLLELFAPEIIVRNEKRMLQEAIDALLDNGRRGRSITGSNKRPLKSLADMIKGKQGRFRQNLLGKRVDYSGRSVITVGPYLHLNQCGIPKKMALELFKPFIYGKLEQRNLATTIKSAKKMVEKEEPIVWDILDEVIHKHPILLNRAPTLHRLGIQAFEPILIEGKAIQLHPLVCAAYNADFDGDQMAIHIPLTKTAQKEACSLMMSTKNILSPANGEPIIVPSQDVVLGIYYMTRKKINGKGENMLLSSPKEAEYMYSLGAVDLHSIVKIRILEYKKDEKKNLTEKKKIIKTTIGRAILWIHVPMGLPFKIFNKTLRKSHISEILNTCYRLLGLKKTVRLADQMMYIGFSYAAKSGVSVGINDIIIPKEKEKIIFQAEKEVLEIDKQFQTGLVTSSERYNKVIDIWAIANENIADAMMKNLSYEIIFQKNKKKITQKSFNNIFIMADSGARGSAAQIRQLAGMRGLMAKPDGSIIETPITANFREGLNVLQYFISTHGARKGLADTALKTANSGYLTRRLVDVAQDLVITQTNCKTKKGILMNSLIEGGDIKETLKERVLGRITVENIYHLNSKNIIIPKNTLLNEKWCNILEKNFIDSIIVRSVVHCETSFGVCAYCYGRDLARGKIVKKGEAVGVIAAQSIGEPGTQLTMRTFHIGGAASKVASESSIQIRKNGIIHLNQAKSVINSNGKIVIISRNVELKMLDKTGKTQESYKIPYGSILTKGEGQKVKAGEIIAKWDPHTIPVITEVNGYIKFIDMVDGKSITKQNDELTGLSSIVVLDISERNILGKDLKPALKIIGKNEEDIFIPGTDMPAQYFLPGKSIILLEDGMKISSGDILARVPQESVGTKDITGGLPRVADLFEARKPKELAILAEINGIVSFGKETKGKRRLILTPIDGNNIYEEMIPKWRQLNVFEGERVEKGDIISDGPESPHDILRLRGVQAVTNYIVNEVQEVYRLQGVKINDKHIEVIIRQMLRKATIINPGDSNFLQGEQIEYSKITSENKKLKKNKKETATFSRDLLGITKASLATESFISAASFQETTRVLTEAAVAGKKDKLRGLKENVIVGRLIPAGTGYKYHKKRLKNRIKNSVNKKNNMSSISVEEAAANLSELLNSTENINNRI.

Residues cysteine 70, cysteine 72, cysteine 85, and cysteine 88 each coordinate Zn(2+). Positions 460, 462, and 464 each coordinate Mg(2+). Residues cysteine 814, cysteine 888, cysteine 895, and cysteine 898 each coordinate Zn(2+).

It belongs to the RNA polymerase beta' chain family. In terms of assembly, the RNAP catalytic core consists of 2 alpha, 1 beta, 1 beta' and 1 omega subunit. When a sigma factor is associated with the core the holoenzyme is formed, which can initiate transcription. The cofactor is Mg(2+). Zn(2+) is required as a cofactor.

The catalysed reaction is RNA(n) + a ribonucleoside 5'-triphosphate = RNA(n+1) + diphosphate. Functionally, DNA-dependent RNA polymerase catalyzes the transcription of DNA into RNA using the four ribonucleoside triphosphates as substrates. The protein is DNA-directed RNA polymerase subunit beta' of Buchnera aphidicola subsp. Cinara cedri (strain Cc).